The chain runs to 211 residues: ATP-dependent dethiobiotin synthetase BioD 2 (211 aa).

13-18 serves as a coordination point for ATP; it reads DIGKTI. T17 serves as a coordination point for Mg(2+). K38 is a catalytic residue. T42 contributes to the substrate binding site. Residues D50, 115–118, and 175–176 each bind ATP; these read EGAG and NT. Positions 50 and 115 each coordinate Mg(2+).

The protein belongs to the dethiobiotin synthetase family. As to quaternary structure, homodimer. The cofactor is Mg(2+).

Its subcellular location is the cytoplasm. It catalyses the reaction (7R,8S)-7,8-diammoniononanoate + CO2 + ATP = (4R,5S)-dethiobiotin + ADP + phosphate + 3 H(+). It functions in the pathway cofactor biosynthesis; biotin biosynthesis; biotin from 7,8-diaminononanoate: step 1/2. In terms of biological role, catalyzes a mechanistically unusual reaction, the ATP-dependent insertion of CO2 between the N7 and N8 nitrogen atoms of 7,8-diaminopelargonic acid (DAPA, also called 7,8-diammoniononanoate) to form a ureido ring. This is ATP-dependent dethiobiotin synthetase BioD 2 from Haemophilus ducreyi (strain 35000HP / ATCC 700724).